We begin with the raw amino-acid sequence, 289 residues long: Energy-coupling factor transporter ATP-binding protein EcfA2 (289 aa).

In terms of domain architecture, ABC transporter spans 3–246 (IQAKKLNYTY…PEWLKNHHLN (244 aa)). 40–47 (GHTGSGKS) is an ATP binding site.

It belongs to the ABC transporter superfamily. Energy-coupling factor EcfA family. As to quaternary structure, forms a stable energy-coupling factor (ECF) transporter complex composed of 2 membrane-embedded substrate-binding proteins (S component), 2 ATP-binding proteins (A component) and 2 transmembrane proteins (T component).

The protein resides in the cell membrane. In terms of biological role, ATP-binding (A) component of a common energy-coupling factor (ECF) ABC-transporter complex. Unlike classic ABC transporters this ECF transporter provides the energy necessary to transport a number of different substrates. This is Energy-coupling factor transporter ATP-binding protein EcfA2 from Ligilactobacillus salivarius (strain UCC118) (Lactobacillus salivarius).